A 474-amino-acid chain; its full sequence is Eukaryotic translation initiation factor 3 subunit L (474 aa).

Residues 255–449 (DAIRMFSHIL…DLDYALQGDL (195 aa)) form the PCI domain.

The protein belongs to the eIF-3 subunit L family. As to quaternary structure, component of the eukaryotic translation initiation factor 3 (eIF-3) complex.

The protein resides in the cytoplasm. Functionally, component of the eukaryotic translation initiation factor 3 (eIF-3) complex, which is involved in protein synthesis of a specialized repertoire of mRNAs and, together with other initiation factors, stimulates binding of mRNA and methionyl-tRNAi to the 40S ribosome. The eIF-3 complex specifically targets and initiates translation of a subset of mRNAs involved in cell proliferation. The polypeptide is Eukaryotic translation initiation factor 3 subunit L (Neurospora crassa (strain ATCC 24698 / 74-OR23-1A / CBS 708.71 / DSM 1257 / FGSC 987)).